Here is a 500-residue protein sequence, read N- to C-terminus: AAA-ATPase At3g28580 (500 aa).

A helical membrane pass occupies residues 7–29 (LWTNTGSALATLMFVYTIFKQFF). The tract at residues 174 to 193 (NRERKLYSNTPGQSHGNNSK) is disordered. Residues 180–193 (YSNTPGQSHGNNSK) are compositionally biased toward polar residues. ATP is bound at residue 247-254 (GPPGTGKS). The segment at 462–500 (KEEAKKKVEEEEEEKQRKKEKVKEIEAEKEKKKKIEEEN) is disordered.

The protein belongs to the AAA ATPase family. BCS1 subfamily. Requires Mg(2+) as cofactor.

The protein resides in the membrane. It catalyses the reaction ATP + H2O = ADP + phosphate + H(+). This is AAA-ATPase At3g28580 from Arabidopsis thaliana (Mouse-ear cress).